Reading from the N-terminus, the 200-residue chain is Protein GrpE (200 aa).

Over residues 1 to 12 (MSNEEIKNKDEQ) the composition is skewed to basic and acidic residues. The segment at 1–30 (MSNEEIKNKDEQLQQDAVETEAEVVGTDAD) is disordered.

This sequence belongs to the GrpE family. In terms of assembly, homodimer.

It localises to the cytoplasm. Functionally, participates actively in the response to hyperosmotic and heat shock by preventing the aggregation of stress-denatured proteins, in association with DnaK and GrpE. It is the nucleotide exchange factor for DnaK and may function as a thermosensor. Unfolded proteins bind initially to DnaJ; upon interaction with the DnaJ-bound protein, DnaK hydrolyzes its bound ATP, resulting in the formation of a stable complex. GrpE releases ADP from DnaK; ATP binding to DnaK triggers the release of the substrate protein, thus completing the reaction cycle. Several rounds of ATP-dependent interactions between DnaJ, DnaK and GrpE are required for fully efficient folding. The chain is Protein GrpE from Vibrio cholerae serotype O1 (strain ATCC 39315 / El Tor Inaba N16961).